Here is a 525-residue protein sequence, read N- to C-terminus: 2-isopropylmalate synthase (525 aa).

In terms of domain architecture, Pyruvate carboxyltransferase spans 5–267 (VIIFDTTLRD…HTGIHHQEIY (263 aa)). The Mn(2+) site is built by Asp14, His202, His204, and Asn238. Residues 392 to 525 (RLEYFSVQSS…NNSQDMQETV (134 aa)) form a regulatory domain region.

Belongs to the alpha-IPM synthase/homocitrate synthase family. LeuA type 1 subfamily. As to quaternary structure, homodimer. Requires Mn(2+) as cofactor.

It localises to the cytoplasm. The catalysed reaction is 3-methyl-2-oxobutanoate + acetyl-CoA + H2O = (2S)-2-isopropylmalate + CoA + H(+). It participates in amino-acid biosynthesis; L-leucine biosynthesis; L-leucine from 3-methyl-2-oxobutanoate: step 1/4. Catalyzes the condensation of the acetyl group of acetyl-CoA with 3-methyl-2-oxobutanoate (2-ketoisovalerate) to form 3-carboxy-3-hydroxy-4-methylpentanoate (2-isopropylmalate). The protein is 2-isopropylmalate synthase of Sodalis glossinidius (strain morsitans).